Consider the following 107-residue polypeptide: Small ribosomal subunit protein uS17 (107 aa).

This sequence belongs to the universal ribosomal protein uS17 family. Part of the 30S ribosomal subunit.

In terms of biological role, one of the primary rRNA binding proteins, it binds specifically to the 5'-end of 16S ribosomal RNA. The protein is Small ribosomal subunit protein uS17 of Thermotoga sp. (strain RQ2).